We begin with the raw amino-acid sequence, 71 residues long: Small ribosomal subunit protein bS18 (71 aa).

Belongs to the bacterial ribosomal protein bS18 family. Part of the 30S ribosomal subunit. Forms a tight heterodimer with protein bS6.

Binds as a heterodimer with protein bS6 to the central domain of the 16S rRNA, where it helps stabilize the platform of the 30S subunit. The polypeptide is Small ribosomal subunit protein bS18 (Synechocystis sp. (strain ATCC 27184 / PCC 6803 / Kazusa)).